Here is a 397-residue protein sequence, read N- to C-terminus: Argininosuccinate synthase (397 aa).

An ATP-binding site is contributed by 8–16 (AYSGGLDTS). Residue Y87 coordinates L-citrulline. G117 contacts ATP. L-aspartate-binding residues include T119, N123, and D124. Position 123 (N123) interacts with L-citrulline. 4 residues coordinate L-citrulline: R127, S175, E259, and Y271.

Belongs to the argininosuccinate synthase family. Type 1 subfamily. As to quaternary structure, homotetramer.

It is found in the cytoplasm. It catalyses the reaction L-citrulline + L-aspartate + ATP = 2-(N(omega)-L-arginino)succinate + AMP + diphosphate + H(+). Its pathway is amino-acid biosynthesis; L-arginine biosynthesis; L-arginine from L-ornithine and carbamoyl phosphate: step 2/3. This chain is Argininosuccinate synthase, found in Streptomyces griseus subsp. griseus (strain JCM 4626 / CBS 651.72 / NBRC 13350 / KCC S-0626 / ISP 5235).